We begin with the raw amino-acid sequence, 1828 residues long: Chromodomain-helicase-DNA-binding protein 2 (1828 aa).

Positions 1–14 are enriched in basic and acidic residues; that stretch reads MMRNKDKSQEEDSS. Residues 1-243 form a disordered region; that stretch reads MMRNKDKSQE…EDDDFETDSD (243 aa). Residues 15 to 75 are compositionally biased toward low complexity; it reads LHSNASSHSA…SESESAGSKS (61 aa). 3 stretches are compositionally biased toward basic and acidic residues: residues 81 to 101, 115 to 128, and 146 to 155; these read EAKE…KMWE, SRQE…KEEA, and KKQEKWKQEP. A compositionally biased stretch (basic residues) spans 175–204; that stretch reads VKARRPVPRRTVPKPRVKKQPKTQRGKRKK. Residues serine 207 and serine 208 each carry the phosphoserine modification. Over residues 234–243 the composition is skewed to acidic residues; that stretch reads EDDDFETDSD. At threonine 240 the chain carries Phosphothreonine. Serine 242 is subject to Phosphoserine. Chromo domains lie at 261–353 and 378–456; these read ETIE…QWLG and QIVE…IPTR. The region spanning 496–666 is the Helicase ATP-binding domain; it reads AHSWCKNNSV…WSLLHFIMPE (171 aa). 509–516 contacts ATP; the sequence is DEMGLGKT. Residues 617-620 carry the DEAH box motif; the sequence is DEAH. One can recognise a Helicase C-terminal domain in the interval 795–946; the sequence is LLDKLLTRLR…HLVIQRMDTT (152 aa). 4 disordered regions span residues 1030–1124, 1331–1462, 1556–1638, and 1680–1828; these read EDEE…RSVR, VTGG…DEDD, HKKR…ADRG, and HMDA…VRKT. Residues 1037 to 1065 show a composition bias toward basic and acidic residues; it reads ERPHKDWDEIIPEEQRKKVEEEERQKELE. Phosphoserine is present on residues serine 1085, serine 1087, serine 1365, and serine 1386. Residues 1347–1371 show a composition bias toward basic and acidic residues; sequence KKENKVPRLKEEHGIELSSPRHSDN. 2 stretches are compositionally biased toward basic and acidic residues: residues 1396–1431 and 1565–1574; these read ENKE…KSGD and EQKKKDDVTG. A CHD1 helical C-terminal domain (CHCT) region spans residues 1464-1566; the sequence is LDQETFSICK…KKRSQEEEEQ (103 aa). Positions 1584–1601 are enriched in polar residues; sequence SGSSRDSLISQSHTSHNL. 4 stretches are compositionally biased toward basic and acidic residues: residues 1698–1720, 1739–1749, 1760–1772, and 1795–1814; these read RPYD…DRHH, QDFRRMSDHRP, DHYR…KLGE, and SPHD…RSLE. The residue at position 1807 (serine 1807) is a Phosphoserine.

Belongs to the SNF2/RAD54 helicase family. Interacts with MYOD1. Interacts with histone H3.3.

It is found in the nucleus. The enzyme catalyses ATP + H2O = ADP + phosphate + H(+). In terms of biological role, ATP-dependent chromatin-remodeling factor that specifically binds to the promoter of target genes, leading to chromatin remodeling, possibly by promoting deposition of histone H3.3. Involved in myogenesis via interaction with MYOD1: binds to myogenic gene regulatory sequences and mediates incorporation of histone H3.3 prior to the onset of myogenic gene expression, promoting their expression. This is Chromodomain-helicase-DNA-binding protein 2 (CHD2) from Homo sapiens (Human).